The primary structure comprises 398 residues: MRLDLTQPDFKAAIPILKKIEAAGYEAYFVGGSVRDAILGLPIHDVDIASSAYPAEIKRIFKRTADTGIEHGTVMVLDHGTGYEVTTFRTESRYQDFRRPDHVTFVRSLAEDLKRRDFTINALAVRHDGTIIDLFDGLKDLQHHQLRAVGNPHERFHEDALRMMRAVRFESQLGFGIEPATKAAIADNAKLLVHISVERVAAEFNRLLTGIDRRAGLQDFIETRLFAYAPKMAAHETALTQFSQLPDTQLTSLASGWAALIFLLRTQPLVMLKAWKQSNELITLVTQTVKLLQVMPNPTAWDLYQAGEAAVTTASEVQKLLTPDFDQQQLAEAYAALPIHSKKELALTGADLIKAGVRPGPAMGKALNQIEQRVVAGALPNELKKLLPIATEMSQDRL.

Positions 32 and 35 each coordinate ATP. Residues Gly32 and Arg35 each coordinate CTP. Mg(2+) contacts are provided by Asp45 and Asp47. Residues Arg116, Asp159, Arg162, Arg165, and Arg168 each coordinate ATP. The CTP site is built by Arg116, Asp159, Arg162, Arg165, and Arg168.

This sequence belongs to the tRNA nucleotidyltransferase/poly(A) polymerase family. Bacterial CCA-adding enzyme type 3 subfamily. As to quaternary structure, homodimer. Mg(2+) serves as cofactor.

It carries out the reaction a tRNA precursor + 2 CTP + ATP = a tRNA with a 3' CCA end + 3 diphosphate. The enzyme catalyses a tRNA with a 3' CCA end + 2 CTP + ATP = a tRNA with a 3' CCACCA end + 3 diphosphate. Functionally, catalyzes the addition and repair of the essential 3'-terminal CCA sequence in tRNAs without using a nucleic acid template. Adds these three nucleotides in the order of C, C, and A to the tRNA nucleotide-73, using CTP and ATP as substrates and producing inorganic pyrophosphate. tRNA 3'-terminal CCA addition is required both for tRNA processing and repair. Also involved in tRNA surveillance by mediating tandem CCA addition to generate a CCACCA at the 3' terminus of unstable tRNAs. While stable tRNAs receive only 3'-terminal CCA, unstable tRNAs are marked with CCACCA and rapidly degraded. This Lacticaseibacillus paracasei (strain ATCC 334 / BCRC 17002 / CCUG 31169 / CIP 107868 / KCTC 3260 / NRRL B-441) (Lactobacillus paracasei) protein is CCA-adding enzyme.